The sequence spans 38 residues: Photosystem II reaction center protein M (38 aa).

A helical membrane pass occupies residues 5–25; it reads ILGLIATALFIVIPTSFLLIL.

This sequence belongs to the PsbM family. As to quaternary structure, PSII is composed of 1 copy each of membrane proteins PsbA, PsbB, PsbC, PsbD, PsbE, PsbF, PsbH, PsbI, PsbJ, PsbK, PsbL, PsbM, PsbT, PsbX, PsbY, PsbZ, Psb30/Ycf12, at least 3 peripheral proteins of the oxygen-evolving complex and a large number of cofactors. It forms dimeric complexes.

The protein localises to the plastid. The protein resides in the cyanelle thylakoid membrane. Its function is as follows. One of the components of the core complex of photosystem II (PSII). PSII is a light-driven water:plastoquinone oxidoreductase that uses light energy to abstract electrons from H(2)O, generating O(2) and a proton gradient subsequently used for ATP formation. It consists of a core antenna complex that captures photons, and an electron transfer chain that converts photonic excitation into a charge separation. This subunit is found at the monomer-monomer interface. The chain is Photosystem II reaction center protein M from Cyanophora paradoxa.